A 1097-amino-acid chain; its full sequence is Cyclin-T (1097 aa).

Disordered regions lie at residues 319–782 (SNIT…SNGI), 804–936 (LLKP…SLQA), and 985–1097 (AAPV…YNKK). A compositionally biased stretch (basic and acidic residues) spans 332-350 (DSRDRDRDRERERERERDP). Low complexity-rich tracts occupy residues 373–390 (SSSV…SSSS), 420–456 (PSSH…GRPS), 467–478 (GMPPVGVGMPPH), and 489–511 (PQQP…SGMS). Positions 580-591 (LPYSQSQSYGHM) are enriched in polar residues. The segment covering 592 to 606 (QQQPVPQSQQQQMPP) has biased composition (low complexity). Residues 609–620 (SQHSLQSKNSLF) show a composition bias toward polar residues. The span at 652–675 (HDYKLNSHPRDKESPKKERLTPTK) shows a compositional bias: basic and acidic residues. A compositionally biased stretch (low complexity) spans 687–698 (GSGNSSSGSGSS). Residues 860–870 (GEIKEESSSKS) show a composition bias toward basic and acidic residues. The segment covering 871 to 883 (EKKKKKDKHKHKE) has biased composition (basic residues). Residues 884-895 (KDKSKDKTEKEE) are compositionally biased toward basic and acidic residues. Residue serine 916 is modified to Phosphoserine. Positions 993 to 1007 (GAGGGGYSSSGGSSS) are enriched in gly residues. The segment covering 1016 to 1031 (SDRDRDKESKKNKSQD) has biased composition (basic and acidic residues). A compositionally biased stretch (gly residues) spans 1037–1050 (GAGGGIFNPLGGAG). A compositionally biased stretch (pro residues) spans 1087–1097 (APPPMPVYNKK).

The protein belongs to the cyclin family. Cyclin C subfamily. Component of the super elongation complex (SEC), at least composed of Ell, Cdk9, cyclin-T (CycT), lilli and ear. Associates with CDK9 to form P-TEFb.

The protein resides in the nucleus. Functionally, regulatory subunit of the cyclin-dependent kinase pair (CDK9/cyclin T) complex, also called positive transcription elongation factor B (P-TEFb), which is proposed to facilitate the transition from abortive to production elongation by phosphorylating the CTD (carboxy-terminal domain) of the large subunit of RNA polymerase II (RNAP II). The sequence is that of Cyclin-T (CycT) from Drosophila melanogaster (Fruit fly).